A 174-amino-acid chain; its full sequence is Cytochrome c oxidase subunit 5A, mitochondrial (174 aa).

The N-terminal 29 residues, 1–29, are a transit peptide targeting the mitochondrion; that stretch reads MASLTRAVTRLAIAGRQAVRTIATTTPVS.

The protein belongs to the cytochrome c oxidase subunit 5A family. Component of the cytochrome c oxidase (complex IV, CIV), a multisubunit enzyme composed of a catalytic core of 3 subunits and several supernumerary subunits. The complex exists as a monomer or a dimer and forms supercomplexes (SCs) in the inner mitochondrial membrane with ubiquinol-cytochrome c oxidoreductase (cytochrome b-c1 complex, complex III, CIII).

The protein localises to the mitochondrion inner membrane. It functions in the pathway energy metabolism; oxidative phosphorylation. In terms of biological role, component of the cytochrome c oxidase, the last enzyme in the mitochondrial electron transport chain which drives oxidative phosphorylation. The respiratory chain contains 3 multisubunit complexes succinate dehydrogenase (complex II, CII), ubiquinol-cytochrome c oxidoreductase (cytochrome b-c1 complex, complex III, CIII) and cytochrome c oxidase (complex IV, CIV), that cooperate to transfer electrons derived from NADH and succinate to molecular oxygen, creating an electrochemical gradient over the inner membrane that drives transmembrane transport and the ATP synthase. Cytochrome c oxidase is the component of the respiratory chain that catalyzes the reduction of oxygen to water. Electrons originating from reduced cytochrome c in the intermembrane space (IMS) are transferred via the dinuclear copper A center (CU(A)) of subunit 2 and heme A of subunit 1 to the active site in subunit 1, a binuclear center (BNC) formed by heme A3 and copper B (CU(B)). The BNC reduces molecular oxygen to 2 water molecules using 4 electrons from cytochrome c in the IMS and 4 protons from the mitochondrial matrix. The chain is Cytochrome c oxidase subunit 5A, mitochondrial from Caenorhabditis elegans.